Here is a 477-residue protein sequence, read N- to C-terminus: Tripartite motif-containing protein 72 (477 aa).

The Zn(2+) site is built by Cys-14, Cys-17, Cys-29, His-31, Cys-34, Cys-37, Cys-53, Cys-56, Cys-86, His-89, Cys-97, Asp-100, Cys-105, Cys-108, His-114, and His-117. The RING-type zinc-finger motif lies at 14–57; it reads CPLCLQLFDAPVTAECGHSFCRACLGRVAGEPAADGTVLCPCCQ. The B box-type zinc-finger motif lies at 81–122; that stretch reads VPQGHCEEHLDPLSIYCEQDRALVCGVCASLGSHRGHRLLPA. The stretch at 135–232 forms a coiled coil; the sequence is QQKLQLQEAC…EKVLEEVADK (98 aa). Cys-144 carries the post-translational modification S-nitrosocysteine. The residue at position 255 (Ser-255) is a Phosphoserine. A B30.2/SPRY domain is found at 271–475; sequence DFKFQVWRKM…PLLLVGPEGA (205 aa).

The protein belongs to the TRIM/RBCC family. As to quaternary structure, homodimer. Homooligomer; disulfide-linked. Oligomerizes on the phospholipid membrane. Interacts with DYSF and CAV3. In terms of processing, disulfide bond formation at Cys-242 occurs in case of membrane damage that cause the entry of the oxidized milieu of the extracellular space, resulting in homooligomerization. S-nitrosylation at Cys-144 stabilizes TRIM72 and protects against oxidation-induced protein degradation and cell death.

Its subcellular location is the cell membrane. The protein localises to the sarcolemma. It localises to the cytoplasmic vesicle membrane. The catalysed reaction is S-ubiquitinyl-[E2 ubiquitin-conjugating enzyme]-L-cysteine + [acceptor protein]-L-lysine = [E2 ubiquitin-conjugating enzyme]-L-cysteine + N(6)-ubiquitinyl-[acceptor protein]-L-lysine.. The protein operates within protein modification; protein ubiquitination. Specifically binds phosphatidylserine. The binding to phospholipids enhances ubiquitination activity. Functionally, muscle-specific E3 ubiquitin-protein ligase that plays a central role in cell membrane repair by nucleating the assembly of the repair machinery at injury sites. Its ubiquitination activity is mediated by E2 ubiquitin-conjugating enzymes UBE2D1, UBE2D2 and UBE2D3. Acts as a sensor of oxidation: upon membrane damage, entry of extracellular oxidative environment results in disulfide bond formation and homooligomerization at the injury site. This oligomerization acts as a nucleation site for recruitment of TRIM72-containing vesicles to the injury site, leading to membrane patch formation. Probably acts upstream of the Ca(2+)-dependent membrane resealing process. Required for transport of DYSF to sites of cell injury during repair patch formation. Regulates membrane budding and exocytosis. May be involved in the regulation of the mobility of KCNB1-containing endocytic vesicles. This Homo sapiens (Human) protein is Tripartite motif-containing protein 72.